Reading from the N-terminus, the 139-residue chain is Holo-[acyl-carrier-protein] synthase (139 aa).

Positions 8 and 57 each coordinate Mg(2+).

Belongs to the P-Pant transferase superfamily. AcpS family. Mg(2+) serves as cofactor.

The protein localises to the cytoplasm. It catalyses the reaction apo-[ACP] + CoA = holo-[ACP] + adenosine 3',5'-bisphosphate + H(+). Transfers the 4'-phosphopantetheine moiety from coenzyme A to a Ser of acyl-carrier-protein. This chain is Holo-[acyl-carrier-protein] synthase, found in Sinorhizobium medicae (strain WSM419) (Ensifer medicae).